The primary structure comprises 593 residues: MLLLWLRALCRRFQHVPRRVPSRQVSRGSKASRAGWGETSKSSVKWKQLEHKGPCFAPAYEPLPDGVRFFYDGKPVRLSLAAEEVATFYGKMLHLECTTKEVFRRNFFSDWQKEMTAEERKLITHLDKCDFSEIHRHFMERAEARRTLPREQKQKLKEEAEKLQQEFGYCILDGHREKIGNFKTEPPGLFRGRGDHPKMGMLKRRVMPEDVVINCSRDSKIPEPPAGHQWKEVRSDNTVMWLAAWVENIQNSFKYIILNPSSKPKGEMDWQKYEVARRLKGVVDKIRAQYQADWKSPEMKKRQLAVALYFIDKLALRTGNEKEEGETADTVGCCSLRVEHVRLHTPADGQEHVVELDFLGKDSIRYKNHVTVEKLVFQNLQHFMEDKDPRDDLFDALTTSSLNKHLQDLMEGLTAKVFRTYNASITLQEQLRVLTRAEDSLTCKVLAYNRANRAVAVLCNHQRAIPKTFEESMQTLQKKIETKKAQVAEAQVELQKAETDLRMRGDSKSKSFLQKQQRLLKLEEQLARLCTKATDKEENKQVALGTAKLNYLDPRISIAWCKRFGVPVEKIYNKTQRERFAWAFNQAGEDFEF.

Residues 1-43 (MLLLWLRALCRRFQHVPRRVPSRQVSRGSKASRAGWGETSKSS) constitute a mitochondrion transit peptide. Interaction with DNA regions lie at residues 254 to 255 (KY), 317 to 322 (RTGNEK), and 414 to 416 (TAK). The 333-residue stretch at 261–593 (SSKPKGEMDW…FNQAGEDFEF (333 aa)) folds into the Topo IB-type catalytic domain. Residue Y551 is the O-(3'-phospho-DNA)-tyrosine intermediate of the active site.

This sequence belongs to the type IB topoisomerase family. The cofactor is Ca(2+). Mg(2+) is required as a cofactor.

Its subcellular location is the mitochondrion. The catalysed reaction is ATP-independent breakage of single-stranded DNA, followed by passage and rejoining.. Its function is as follows. Releases the supercoiling and torsional tension of DNA introduced during duplication of mitochondrial DNA by transiently cleaving and rejoining one strand of the DNA duplex. Introduces a single-strand break via transesterification at a target site in duplex DNA. The scissile phosphodiester is attacked by the catalytic tyrosine of the enzyme, resulting in the formation of a DNA-(3'-phosphotyrosyl)-enzyme intermediate and the expulsion of a 5'-OH DNA strand. The free DNA strand then rotates around the intact phosphodiester bond on the opposing strand, thus removing DNA supercoils. Finally, in the religation step, the DNA 5'-OH attacks the covalent intermediate to expel the active-site tyrosine and restore the DNA phosphodiester backbone. This chain is DNA topoisomerase I, mitochondrial (Top1mt), found in Rattus norvegicus (Rat).